The sequence spans 437 residues: Nuclear hormone receptor family member nhr-100 (437 aa).

A DNA-binding region (nuclear receptor) is located at residues 21-96 (DTSCLVCGDP…VGMDANAVRS (76 aa)). 2 NR C4-type zinc fingers span residues 24-44 (CLVCGDPHGKRHYGAMSCNGC) and 60-79 (CSFNNECIIEFKYRNRCRAC). Residues 141–409 (QTKEIIAHML…SGGGLPYDIH (269 aa)) enclose the NR LBD domain.

It belongs to the nuclear hormone receptor family.

Its subcellular location is the nucleus. In terms of biological role, orphan nuclear receptor. This is Nuclear hormone receptor family member nhr-100 (nhr-100) from Caenorhabditis elegans.